We begin with the raw amino-acid sequence, 695 residues long: Elongation factor G 2 (695 aa).

In terms of domain architecture, tr-type G spans 5-280; it reads SKYRNIGIFA…AVVDYLPSPT (276 aa). Residues 14–21, 78–82, and 132–135 each bind GTP; these read AHVDAGKT, DTPGH, and NKLD.

This sequence belongs to the TRAFAC class translation factor GTPase superfamily. Classic translation factor GTPase family. EF-G/EF-2 subfamily.

Its subcellular location is the cytoplasm. Functionally, catalyzes the GTP-dependent ribosomal translocation step during translation elongation. During this step, the ribosome changes from the pre-translocational (PRE) to the post-translocational (POST) state as the newly formed A-site-bound peptidyl-tRNA and P-site-bound deacylated tRNA move to the P and E sites, respectively. Catalyzes the coordinated movement of the two tRNA molecules, the mRNA and conformational changes in the ribosome. This Vibrio vulnificus (strain YJ016) protein is Elongation factor G 2.